The chain runs to 91 residues: Putative defensin-like protein 83 (91 aa).

A signal peptide spans Met-1–Gly-27. Disulfide bonds link Cys-32–Cys-71, Cys-37–Cys-57, Cys-43–Cys-69, and Cys-47–Cys-70.

It belongs to the DEFL family.

The protein localises to the secreted. This is Putative defensin-like protein 83 (LCR46) from Arabidopsis thaliana (Mouse-ear cress).